A 190-amino-acid polypeptide reads, in one-letter code: (S)-2-hydroxypropylphosphonic acid epoxidase (190 aa).

The HTH cro/C1-type domain maps to 10 to 60 (KAHLEALLATRKMTLEHLQDVRHDATQVYFDGLEHLQNVAQYLAIPLSEFF). The H-T-H motif DNA-binding region spans 20–40 (RKMTLEHLQDVRHDATQVYFD). Substrate-binding positions include Arg87, Tyr95, 125-128 (NGGH), and Glu132. 3 residues coordinate Fe cation: His128, Glu132, and His171. The region spanning 128–176 (HGSREIVYVTRGAVRVRWVGDNDELKEDVLNEGDSIFILPNVPHSFTNH) is the Cupin type-2 domain.

It belongs to the non-heme iron-dependent dioxygenase family. As to quaternary structure, homotrimer. The cofactor is Fe(2+).

It carries out the reaction (S)-2-hydroxypropylphosphonate + H2O2 = (1R,2S)-epoxypropylphosphonate + 2 H2O. The protein operates within antibiotic biosynthesis; fosfomycin biosynthesis. Non-heme-dependent dioxygenase that catalyzes the oxidative epoxidation of (S)-2-hydroxypropylphosphonate into (1R,2S)-epoxypropylphosphonate, the final step in the biosynthesis of fosfomycin antibiotic. This chain is (S)-2-hydroxypropylphosphonic acid epoxidase (hppE), found in Pseudomonas syringae.